The sequence spans 325 residues: Ribonucleoside-diphosphate reductase small chain (325 aa).

D74, E105, and H108 together coordinate Fe cation. The active site involves Y112. Residues E168, E202, and H205 each coordinate Fe cation.

Belongs to the ribonucleoside diphosphate reductase small chain family. In terms of assembly, heterodimer of a large and a small chain. Fe cation is required as a cofactor.

It carries out the reaction a 2'-deoxyribonucleoside 5'-diphosphate + [thioredoxin]-disulfide + H2O = a ribonucleoside 5'-diphosphate + [thioredoxin]-dithiol. Ribonucleoside-diphosphate reductase holoenzyme provides the precursors necessary for viral DNA synthesis. Allows virus growth in non-dividing cells. Catalyzes the biosynthesis of deoxyribonucleotides from the corresponding ribonucleotides. In Yaba-like disease virus (YLDV), this protein is Ribonucleoside-diphosphate reductase small chain.